Here is a 475-residue protein sequence, read N- to C-terminus: Histidine--tRNA ligase (475 aa).

Belongs to the class-II aminoacyl-tRNA synthetase family. Homodimer.

Its subcellular location is the cytoplasm. It carries out the reaction tRNA(His) + L-histidine + ATP = L-histidyl-tRNA(His) + AMP + diphosphate + H(+). The sequence is that of Histidine--tRNA ligase from Flavobacterium johnsoniae (strain ATCC 17061 / DSM 2064 / JCM 8514 / BCRC 14874 / CCUG 350202 / NBRC 14942 / NCIMB 11054 / UW101) (Cytophaga johnsonae).